The following is a 363-amino-acid chain: Actin-related protein 7 (363 aa).

At M1 the chain carries N-acetylmethionine.

The protein belongs to the actin family. Plant ARP7 subfamily. In terms of tissue distribution, mostly expressed in flowers, and, to a lower extent, in roots, seedlings, leaves and siliques (at protein level).

It localises to the nucleus. Its subcellular location is the cytoplasm. Essential protein required during embryogenesis and all plant development stages, probably through a chromatin-mediated regulation of gene expression. The chain is Actin-related protein 7 (ARP7) from Arabidopsis thaliana (Mouse-ear cress).